Here is a 587-residue protein sequence, read N- to C-terminus: Inorganic phosphate transporter PHO84 (587 aa).

The Extracellular segment spans residues 1–67; sequence MSSVNKDTIH…FGWQQVKTIS (67 aa). Lysine 6 participates in a covalent cross-link: Glycyl lysine isopeptide (Lys-Gly) (interchain with G-Cter in ubiquitin). Residues 68–88 form a helical membrane-spanning segment; that stretch reads IAGVGFLTDSYDIFAINLGIT. The Cytoplasmic portion of the chain corresponds to 89–108; sequence MMSYVYWHGSMPGPSQTLLK. Residues 109–129 traverse the membrane as a helical segment; sequence VSTSVGTVIGQFGFGTLADIV. Over 130–133 the chain is Extracellular; that stretch reads GRKR. The chain crosses the membrane as a helical span at residues 134-154; the sequence is IYGMELIIMIVCTILQTTVAH. The Cytoplasmic segment spans residues 155–156; the sequence is SP. The helical transmembrane segment at 157 to 177 threads the bilayer; sequence AINFVAVLTFYRIVMGIGIGG. The Extracellular segment spans residues 178 to 201; sequence DYPLSSIITSEFATTKWRGAIMGA. A helical membrane pass occupies residues 202–222; it reads VFANQAWGQISGGIIALILVA. Over 223 to 250 the chain is Cytoplasmic; sequence AYKGELEYANSGAECDARCQKACDQMWR. The helical transmembrane segment at 251-271 threads the bilayer; it reads ILIGLGTVLGLACLYFRLTIP. Residues 272 to 345 are Extracellular-facing; that stretch reads ESPRYQLDVN…RHFGQWKYGK (74 aa). A Glycyl lysine isopeptide (Lys-Gly) (interchain with G-Cter in ubiquitin) cross-link involves residue lysine 298. Phosphothreonine is present on threonine 302. Phosphoserine is present on residues serine 303 and serine 316. Threonine 317 is modified (phosphothreonine). The residue at position 321 (serine 321) is a Phosphoserine. The helical transmembrane segment at 346-366 threads the bilayer; the sequence is ILLGTAGSWFTLDVAFYGLSL. Topologically, residues 367–395 are cytoplasmic; sequence NSAVILQTIGYAGSKNVYKKLYDTAVGNL. Residues 396 to 416 form a helical membrane-spanning segment; it reads ILICAGSLPGYWVSVFTVDII. Residues 417–419 are Extracellular-facing; it reads GRK. Residues 420-440 traverse the membrane as a helical segment; it reads PIQLAGFIILTALFCVIGFAY. At 441-442 the chain is on the cytoplasmic side; the sequence is HK. Residues 443-463 form a helical membrane-spanning segment; that stretch reads LGDHGLLALYVICQFFQNFGP. The Extracellular portion of the chain corresponds to 464–485; sequence NTTTFIVPGECFPTRYRSTAHG. A helical membrane pass occupies residues 486–506; it reads ISAASGKVGAIIAQTALGTLI. At 507 to 522 the chain is on the cytoplasmic side; the sequence is DHNCARDGKPTNCWLP. Residues 523–543 form a helical membrane-spanning segment; sequence HVMEIFALFMLLGIFTTLLIP. Residues 544-587 lie on the Extracellular side of the membrane; that stretch reads ETKRKTLEEINELYHDEIDPATLNFRNKNNDIESSSPSQLQHEA. The segment at 568-587 is disordered; sequence FRNKNNDIESSSPSQLQHEA. Residues serine 577, serine 579, and serine 581 each carry the phosphoserine modification.

This sequence belongs to the major facilitator superfamily. Phosphate:H(+) symporter (TC 2.A.1.9) family. In terms of assembly, may function as a monomer. Post-translationally, phosphorylated; phosphorylation increases after phosphate addition to the growth medium. Ubiquitinated in a phosphate-dependent manner; ubiquitination may influence the trafficking of PHO84 to the cell membrane and serve as a signal for endocytosis and internalization.

The protein resides in the cell membrane. It localises to the vacuole. It catalyses the reaction phosphate(in) + H(+)(in) = phosphate(out) + H(+)(out). The catalysed reaction is Mn(2+)(in) = Mn(2+)(out). It carries out the reaction Zn(2+)(in) = Zn(2+)(out). The enzyme catalyses Cu(2+)(in) = Cu(2+)(out). It catalyses the reaction Co(2+)(in) = Co(2+)(out). With respect to regulation, transport activity is inhibited in the presence of the protonophore carbonylcyanide m-chlorophenylhydrazone. Transport activity is inhibited by glycerol-3-phosphate. Transport activity is inhibited by phosphonoacetic acid. Signaling activity is stimulated by glycerol-3-phosphate which acts as a nontransported PHO84 agonist that can trigger PKA signaling. Signaling activity is stimulated by arsenate. In terms of biological role, proton-coupled high-affinity transporter for external inorganic phosphate. Acts as a transceptor, a membrane protein that in addition to its transporter activity also possesses receptor-like signaling activity; mediates activation of the protein kinase A (PKA) pathway targets during growth induction, triggered by phosphate addition to cells growth-arrested due to previous phosphate starvation. Is not an essential protein, since constitutive, low affinity phosphate transporters exist in yeast. Can function as a low affinity metal transporter that transports manganese, zinc, cobalt and copper. Plays a role in manganese homeostasis predominantly under manganese surplus conditions. This chain is Inorganic phosphate transporter PHO84 (PHO84), found in Saccharomyces cerevisiae (strain ATCC 204508 / S288c) (Baker's yeast).